A 497-amino-acid polypeptide reads, in one-letter code: Probable malate:quinone oxidoreductase (497 aa).

This sequence belongs to the MQO family. FAD is required as a cofactor.

It carries out the reaction (S)-malate + a quinone = a quinol + oxaloacetate. It participates in carbohydrate metabolism; tricarboxylic acid cycle; oxaloacetate from (S)-malate (quinone route): step 1/1. The protein is Probable malate:quinone oxidoreductase of Wolinella succinogenes (strain ATCC 29543 / DSM 1740 / CCUG 13145 / JCM 31913 / LMG 7466 / NCTC 11488 / FDC 602W) (Vibrio succinogenes).